The chain runs to 713 residues: Elongation factor G (713 aa).

The region spanning 8 to 290 is the tr-type G domain; it reads ERYRNFGIMA…GVIQLLPSPV (283 aa). Residues 17–24, 88–92, and 142–145 contribute to the GTP site; these read AHIDAGKT, DTPGH, and NKMD.

Belongs to the TRAFAC class translation factor GTPase superfamily. Classic translation factor GTPase family. EF-G/EF-2 subfamily.

It localises to the cytoplasm. Functionally, catalyzes the GTP-dependent ribosomal translocation step during translation elongation. During this step, the ribosome changes from the pre-translocational (PRE) to the post-translocational (POST) state as the newly formed A-site-bound peptidyl-tRNA and P-site-bound deacylated tRNA move to the P and E sites, respectively. Catalyzes the coordinated movement of the two tRNA molecules, the mRNA and conformational changes in the ribosome. The protein is Elongation factor G of Stenotrophomonas maltophilia (strain K279a).